Here is a 295-residue protein sequence, read N- to C-terminus: MSKIVGSDRVKRGMAEMQKGGVIMDVVNAEQAKIAEEAGAVAVMALERVPSDIRAAGGVARMANPKIVEEVMNAVSIPVMAKARIGHITEARVLESMGVDYIDESEVLTPADEEYHLRKDQFTVPFVCGCRNLGEAARRIGEGAAMLRTKGEPGTGNIVEAVRHMRRVNSEVSRLTVMNDDEIMTFAKDLGAPYEVLKQIKDNGRLPVVNFAAGGVATPQDAALMMELGADGVFVGSGIFKSEDPEKFAKAIVQATTHYQDYELIGKLASELGTAMKGLDINQISLEERMQERGW.

Asp-25 provides a ligand contact to D-ribose 5-phosphate. The Schiff-base intermediate with D-ribose 5-phosphate role is filled by Lys-82. Gly-154 is a D-ribose 5-phosphate binding site. Arg-166 serves as a coordination point for D-glyceraldehyde 3-phosphate. D-ribose 5-phosphate-binding positions include Gly-215 and 236-237 (GS).

Belongs to the PdxS/SNZ family. In the presence of PdxT, forms a dodecamer of heterodimers.

It carries out the reaction aldehydo-D-ribose 5-phosphate + D-glyceraldehyde 3-phosphate + L-glutamine = pyridoxal 5'-phosphate + L-glutamate + phosphate + 3 H2O + H(+). It participates in cofactor biosynthesis; pyridoxal 5'-phosphate biosynthesis. Its function is as follows. Catalyzes the formation of pyridoxal 5'-phosphate from ribose 5-phosphate (RBP), glyceraldehyde 3-phosphate (G3P) and ammonia. The ammonia is provided by the PdxT subunit. Can also use ribulose 5-phosphate and dihydroxyacetone phosphate as substrates, resulting from enzyme-catalyzed isomerization of RBP and G3P, respectively. This is Pyridoxal 5'-phosphate synthase subunit PdxS from Staphylococcus epidermidis (strain ATCC 35984 / DSM 28319 / BCRC 17069 / CCUG 31568 / BM 3577 / RP62A).